The sequence spans 214 residues: Vascular endothelial growth factor A (214 aa).

A signal peptide spans Met1–Ala26. 3 disulfides stabilise this stretch: Cys51–Cys93, Cys82–Cys127, and Cys86–Cys129. Asn100 is a glycosylation site (N-linked (GlcNAc...) asparagine). Residues Pro131 to Ser142 are compositionally biased toward basic and acidic residues. The interval Pro131–Phe159 is disordered. A compositionally biased stretch (basic residues) spans Val143 to Phe159.

Belongs to the PDGF/VEGF growth factor family. Homodimer; disulfide-linked. Also found as heterodimer with PGF. Interacts with NRP1. Interacts with isoform 2 of BSG. Interacts with CD82; this interaction inhibits VEGFA-mediated signaling pathway. In terms of tissue distribution, expressed in the pituitary, in brain, in particularly in supraoptic and paraventricular nuclei and the choroid plexus. Also found abundantly in the corpus luteum of the ovary and in kidney glomeruli. Expressed in the ductal epithelial cells of post-pubertal mammary glands. Expressed in the ductal and alveolar epithelial cells throughout the whole period of gestational evolution, lactation and involution.

The protein localises to the secreted. Its function is as follows. Growth factor active in angiogenesis, vasculogenesis and endothelial cell growth. Induces endothelial cell proliferation, promotes cell migration, inhibits apoptosis and induces permeabilization of blood vessels. Binds to the FLT1/VEGFR1 and KDR/VEGFR2 receptors, heparan sulfate and heparin. May play a role in increasing vascular permeability during lactation, when increased transport of molecules from the blood is required for efficient milk protein synthesis. Binding to NRP1 receptor initiates a signaling pathway needed for motor neuron axon guidance and cell body migration, including for the caudal migration of facial motor neurons from rhombomere 4 to rhombomere 6 during embryonic development. Also binds the DEAR/FBXW7-AS1 receptor. This Rattus norvegicus (Rat) protein is Vascular endothelial growth factor A (Vegfa).